The sequence spans 504 residues: MSVPKFNDLSFYSDPSAHKSRYANLVKTFKSKYPNDEIEFFARSPGRVNLIGDHIDYNYFPVLPMAIEVDVVAAVSTNNNDMIVIANTDSAKFPKETVSLAEEFTIDREHHTWANYFKCGLIVASKFLQEKAMTKLKGMNITFSGTVPTGGGLSSSAAFCVASTLAVLYANGVEDISKADLTRITVVSEHYLGLNNGGMDQCASVYGEQGKALFIQFKPQLKGTPFEFPVKNLTFVITNSLQVSNKYETAPIHYNLRVVEMAIAGDLLAKKLNVEGKEGIVKDSNVDTYSLRGVMDGYCGAWDGEDLDVGVVHLEKMIDVVGKTLTKEGGYTVEQCCEEMGLTPEEFHSRYLKKIPVKFDVLKLYERALHVYRESLRVLKTLQLLSTVVDASQFLQTFGSLMNESQHDLDILNESSNPKLNEICSIALANGAYGSRVTGAGWGGSIVHLTTTENLPKLTKSLEAYYKREFPGITDEEIREAVIDSKPATGSCLVKLDFSHALQG.

Alpha-D-galactose contacts are provided by R47, D53, H54, and D56. Residues G150, G152, S154, and S155 each contribute to the ATP site. Positions 196 and 200 each coordinate alpha-D-galactose. D200 serves as the catalytic Proton acceptor. Positions 244, 245, and 246 each coordinate ATP. Y254 is an alpha-D-galactose binding site.

It belongs to the GHMP kinase family. GalK subfamily.

The enzyme catalyses alpha-D-galactose + ATP = alpha-D-galactose 1-phosphate + ADP + H(+). It participates in carbohydrate metabolism; galactose metabolism. In terms of biological role, galactokinase is a key enzyme in the galactose metabolism where it catalyzes the conversion of alpha-D-galactose to galactose 1-phosphate. Can also induce the transcription of the gal genes in response to the organism being challenged with galactose as the sole source of carbon. This Candida parapsilosis (Yeast) protein is Galactokinase.